The primary structure comprises 1171 residues: Zinc finger BED domain-containing protein 4 (1171 aa).

The disordered stretch occupies residues 25–62; that stretch reads EEEDDDGIPPDSLERMDFKSEQEDMKQTDSGGERAGLG. Basic and acidic residues predominate over residues 36 to 51; that stretch reads SLERMDFKSEQEDMKQ. A Glycyl lysine isopeptide (Lys-Gly) (interchain with G-Cter in SUMO2) cross-link involves residue lysine 43. BED-type zinc fingers lie at residues 115 to 172 and 285 to 342; these read RKKS…LIQE and RRRS…VLQE. Residues cysteine 136, cysteine 139, histidine 160, histidine 165, cysteine 306, cysteine 309, histidine 330, and histidine 335 each contribute to the Zn(2+) site. A compositionally biased stretch (low complexity) spans 362–385; it reads LLPPEGELSSVSSSPVKPVRESPS. The interval 362–405 is disordered; the sequence is LLPPEGELSSVSSSPVKPVRESPSASSSPDRLTEDLQSHLNPGD. BED-type zinc fingers lie at residues 456 to 512 and 558 to 615; these read RLKS…VGSQ and KKTS…LKTE. The Zn(2+) site is built by cysteine 477 and cysteine 480. A Glycyl lysine isopeptide (Lys-Gly) (interchain with G-Cter in SUMO2) cross-link involves residue lysine 489. Positions 500, 505, 579, 582, 603, and 608 each coordinate Zn(2+). The disordered stretch occupies residues 614–640; sequence TEVSETARPSSPDTRVPRGTELSGASS. The residue at position 624 (serine 624) is a Phosphoserine. Residues 1086 to 1171 are required for homodimerization and nuclear accumulation; it reads LAYLEEEVLE…VNLPLIYFQY (86 aa).

In terms of assembly, homodimer; via C-terminus. Interacts with MYH9. Interacts with SAFB/SAFB1. Expressed in testis, heart, lung, and weakly expressed in brain, liver, muscle, placenta and small intestine. Expressed in the retina, found in the cone photoreceptors, Mueller cells, cone pedicles and in the innermost retinal layer.

The protein resides in the nucleus. Its subcellular location is the cytoplasm. It localises to the photoreceptor inner segment. Functionally, transcriptional regulator that binds to poly-guanine tracts in gene promoters and activates transcription. Able to bind single- and double-stranded DNA and RNA. The polypeptide is Zinc finger BED domain-containing protein 4 (ZBED4) (Homo sapiens (Human)).